The primary structure comprises 490 residues: Homoserine O-acetyltransferase (490 aa).

The 309-residue stretch at 47–355 (NAILVCHALT…DYGHDAFLLE (309 aa)) folds into the AB hydrolase-1 domain. Residue Ser-152 is the Nucleophile of the active site. Residue Arg-222 coordinates substrate. Active-site residues include Asp-316 and His-349. Asp-350 contacts substrate. CBS domains are found at residues 376–436 (MKTD…LEDV) and 437–490 (MTKD…ISSY).

The protein belongs to the AB hydrolase superfamily. MetX family. In terms of assembly, homodimer.

It is found in the cytoplasm. It carries out the reaction L-homoserine + acetyl-CoA = O-acetyl-L-homoserine + CoA. The protein operates within amino-acid biosynthesis; L-methionine biosynthesis via de novo pathway; O-acetyl-L-homoserine from L-homoserine: step 1/1. Transfers an acetyl group from acetyl-CoA to L-homoserine, forming acetyl-L-homoserine. In Methanobrevibacter ruminantium (strain ATCC 35063 / DSM 1093 / JCM 13430 / OCM 146 / M1) (Methanobacterium ruminantium), this protein is Homoserine O-acetyltransferase.